The chain runs to 198 residues: Transcriptional regulator GfcR (198 aa).

This sequence belongs to the purine/pyrimidine phosphoribosyltransferase family. GfcR subfamily.

This chain is Transcriptional regulator GfcR, found in Methanospirillum hungatei JF-1 (strain ATCC 27890 / DSM 864 / NBRC 100397 / JF-1).